Consider the following 353-residue polypeptide: ATP-dependent (S)-NAD(P)H-hydrate dehydratase (353 aa).

Positions 18-345 constitute a YjeF C-terminal domain; sequence MLARVRQMVP…DEVHTAFLNL (328 aa). The segment at 95–121 is disordered; that stretch reads RSSPPALSSSDSGSSPSRTKSAPDTDP. Over residues 96-114 the composition is skewed to low complexity; the sequence is SSPPALSSSDSGSSPSRTK. (6S)-NADPHX contacts are provided by residues Gly143 and 196 to 202; that span reads NVVEFGR. ATP-binding positions include 241-245 and 260-269; these read KGAKD and GGLKRSGGQG. Asp270 is a (6S)-NADPHX binding site.

The protein belongs to the NnrD/CARKD family. Mg(2+) is required as a cofactor.

The protein localises to the cytoplasm. The catalysed reaction is (6S)-NADHX + ATP = ADP + phosphate + NADH + H(+). The enzyme catalyses (6S)-NADPHX + ATP = ADP + phosphate + NADPH + H(+). In terms of biological role, catalyzes the dehydration of the S-form of NAD(P)HX at the expense of ATP, which is converted to ADP. Together with NAD(P)HX epimerase, which catalyzes the epimerization of the S- and R-forms, the enzyme allows the repair of both epimers of NAD(P)HX, a damaged form of NAD(P)H that is a result of enzymatic or heat-dependent hydration. The protein is ATP-dependent (S)-NAD(P)H-hydrate dehydratase of Neurospora crassa (strain ATCC 24698 / 74-OR23-1A / CBS 708.71 / DSM 1257 / FGSC 987).